A 519-amino-acid chain; its full sequence is Pleckstrin homology domain-containing family A member 8 (519 aa).

The region spanning 1–93 (MEGVLYKWTN…WLVALGSAKA (93 aa)) is the PH domain. Thr-139 bears the Phosphothreonine mark. A Phosphoserine modification is found at Ser-145. Phosphothreonine is present on Thr-153. The tract at residues 310-519 (TFFSTMNTSF…VHGLESDEVV (210 aa)) is glycolipid transfer protein homology domain.

As to quaternary structure, homodimer. Interacts with ARF1; the interaction together with phosphatidylinositol 4-phosphate binding is required for FAPP2 GlcCer transfer ability. Expressed in kidney cell lines.

The protein resides in the golgi apparatus. The protein localises to the trans-Golgi network membrane. It is found in the membrane. Functionally, cargo transport protein that is required for apical transport from the Golgi complex. Transports AQP2 from the trans-Golgi network (TGN) to sites of AQP2 phosphorylation. Mediates the non-vesicular transport of glucosylceramide (GlcCer) from the trans-Golgi network (TGN) to the plasma membrane and plays a pivotal role in the synthesis of complex glycosphingolipids. Binding of both phosphatidylinositol 4-phosphate (PIP) and ARF1 are essential for the GlcCer transfer ability. Also required for primary cilium formation, possibly by being involved in the transport of raft lipids to the apical membrane, and for membrane tubulation. This Homo sapiens (Human) protein is Pleckstrin homology domain-containing family A member 8 (PLEKHA8).